A 385-amino-acid chain; its full sequence is Isocitrate dehydrogenase [NAD] subunit beta, mitochondrial (385 aa).

The transit peptide at 1 to 34 (MAALSGVRWLTRALVSAGNPGAWRGLSTSAAAHA) directs the protein to the mitochondrion. N6-acetyllysine is present on lysine 199.

Belongs to the isocitrate and isopropylmalate dehydrogenases family. Heterooligomer of subunits alpha (IDH3A), beta (IDH3B), and gamma (IDH3G) in the apparent ratio of 2:1:1. The heterodimer containing one IDH3A and one IDH3B subunit and the heterodimer containing one IDH3A and one IDH3G subunit assemble into a heterotetramer (which contains two subunits of IDH3A, one of IDH3B and one of IDH3G) and further into the heterooctamer.

Its subcellular location is the mitochondrion. With respect to regulation, the heterotetramer and the heterodimer composed of IDH3A and IDH3G subunits can be allosterically activated by citrate (CIT) or/and ADP, and the two activators can act independently or synergistically. The heterodimer composed of IDH3A and IDH3B subunits cannot be allosterically regulated and the allosteric regulation of the heterotetramer is through the IDH3G subunit and not the IDH3B subunit. The IDH3G subunit contains the allosteric site which consists of a CIT-binding site and an ADP-binding site, and the binding of CIT and ADP causes conformational changes at the allosteric site which are transmitted to the active site in the catalytic subunit (IDH3A) through a cascade of conformational changes at the heterodimer interface, leading to stabilization of the isocitrate-binding at the active site and thus activation of the enzyme. ATP can activate the heterotetramer and the heterodimer composed of IDH3A and IDH3G subunits at low concentrations but inhibits their activities at high concentrations, whereas ATP exhibits only inhibitory effect on the heterodimer composed of IDH3A and IDH3B subunits. Plays a structural role to facilitate the assembly and ensure the full activity of the enzyme catalyzing the decarboxylation of isocitrate (ICT) into alpha-ketoglutarate. The heterodimer composed of the alpha (IDH3A) and beta (IDH3B) subunits and the heterodimer composed of the alpha (IDH3A) and gamma (IDH3G) subunits, have considerable basal activity but the full activity of the heterotetramer (containing two subunits of IDH3A, one of IDH3B and one of IDH3G) requires the assembly and cooperative function of both heterodimers. The sequence is that of Isocitrate dehydrogenase [NAD] subunit beta, mitochondrial (IDH3B) from Homo sapiens (Human).